We begin with the raw amino-acid sequence, 381 residues long: MFEMYIESGMNKLRCGYTTGSCATGAAKAATMLLFDLINSEEELNEIEIDTPKGIKVEMPIDNVVVGKNFVQCTILKFSGDDKDITMGLEIQARVEKIRKEEAEGLSKKLISNESKTIVLDGGIGVGRVTKDGLFVAKGEPAINPVPRQMIIKEIESILPKDKYVKVVISVPQGTEIGKKTFNPRLGIEGGISILGTSGIVYPMSEDALKASIKLEIKQKSLKSKNLILTFGNLGENYCKYLGYKEEEIVICSNFIGFALECCVSCNVKSIIIVGHIGKMSKIAYGCFNTHSRVCGVRLEVLALELTLLGYDISLVNKVLNEKTCEGAVKLLGSGYENLYENIGQKILNSMKTYVYDELKIDAVMYYGASNPILLWSSCLE.

This sequence belongs to the CbiD family.

It carries out the reaction Co-precorrin-5B + S-adenosyl-L-methionine = Co-precorrin-6A + S-adenosyl-L-homocysteine. Its pathway is cofactor biosynthesis; adenosylcobalamin biosynthesis; cob(II)yrinate a,c-diamide from sirohydrochlorin (anaerobic route): step 6/10. Its function is as follows. Catalyzes the methylation of C-1 in cobalt-precorrin-5B to form cobalt-precorrin-6A. The protein is Cobalt-precorrin-5B C(1)-methyltransferase of Clostridium botulinum (strain Alaska E43 / Type E3).